Consider the following 1035-residue polypeptide: Sulfite reductase [NADPH] flavoprotein component (1035 aa).

The FAD-binding FR-type domain maps to 648–879 (VKNFVVKVKE…VKPSVMKLPP (232 aa)). FAD is bound by residues 684–695 (YDIGEALGIHAR) and 814–824 (LKRREYSIASS).

Requires FAD as cofactor. It depends on FMN as a cofactor.

The enzyme catalyses hydrogen sulfide + 3 NADP(+) + 3 H2O = sulfite + 3 NADPH + 4 H(+). The protein operates within sulfur metabolism; hydrogen sulfide biosynthesis; hydrogen sulfide from sulfite (NADPH route): step 1/1. In terms of biological role, this enzyme catalyzes the 6-electron reduction of sulfite to sulfide. This is one of several activities required for the biosynthesis of L-cysteine from sulfate. The sequence is that of Sulfite reductase [NADPH] flavoprotein component (MET10) from Saccharomyces cerevisiae (strain ATCC 204508 / S288c) (Baker's yeast).